The following is a 490-amino-acid chain: Protein twist (490 aa).

3 disordered regions span residues 48 to 74 (QLQH…QHTQ), 98 to 167 (PSNE…TGGS), and 330 to 359 (LDGS…ETDE). A compositionally biased stretch (basic residues) spans 54 to 64 (QHLHSHQHHQQ). 2 stretches are compositionally biased toward low complexity: residues 65–74 (HQQQQQQHTQ) and 104–135 (STSS…NNPS). Basic residues predominate over residues 339-351 (AFRKPRRRLKRKP). In terms of domain architecture, bHLH spans 362–413 (NQRVMANVRERQRTQSLNDAFKSLQQIIPTLPSDKLSKIQTLKLATRYIDFL).

As to quaternary structure, efficient DNA binding requires dimerization with another bHLH protein. Homodimer.

It localises to the nucleus. In terms of biological role, involved in the establishment and dorsoventral patterning of germ layers in the embryo. The chain is Protein twist from Drosophila erecta (Fruit fly).